The following is a 179-amino-acid chain: Large ribosomal subunit protein uL5 (179 aa).

The protein belongs to the universal ribosomal protein uL5 family. In terms of assembly, part of the 50S ribosomal subunit; part of the 5S rRNA/L5/L18/L25 subcomplex. Contacts the 5S rRNA and the P site tRNA. Forms a bridge to the 30S subunit in the 70S ribosome.

Functionally, this is one of the proteins that bind and probably mediate the attachment of the 5S RNA into the large ribosomal subunit, where it forms part of the central protuberance. In the 70S ribosome it contacts protein S13 of the 30S subunit (bridge B1b), connecting the 2 subunits; this bridge is implicated in subunit movement. Contacts the P site tRNA; the 5S rRNA and some of its associated proteins might help stabilize positioning of ribosome-bound tRNAs. The protein is Large ribosomal subunit protein uL5 of Herminiimonas arsenicoxydans.